We begin with the raw amino-acid sequence, 380 residues long: Outer mitochondrial transmembrane helix translocase (380 aa).

Topologically, residues 1–18 (MLSDIPRDALLRPLTRNE) are mitochondrial intermembrane. A helical transmembrane segment spans residues 19–37 (VVGMLVRLTVFGAATYYSI). The Cytoplasmic portion of the chain corresponds to 38-380 (KWVVDALDPT…PANLREVPLD (343 aa)). Residue 136-143 (GPPGCGKT) coordinates ATP.

The protein belongs to the AAA ATPase family. MSP1 subfamily.

The protein resides in the mitochondrion outer membrane. It localises to the peroxisome membrane. It is found in the postsynaptic cell membrane. It carries out the reaction [protein]-with a C-terminal TM segment(out) + ATP + H2O = [protein]-with a C-terminal TM segment(in) + ADP + phosphate + H(+). Outer mitochondrial translocase required to remove mislocalized tail-anchored transmembrane proteins on mitochondria. Specifically recognizes and binds tail-anchored transmembrane proteins: acts as a dislocase that mediates the ATP-dependent extraction of mistargeted tail-anchored transmembrane proteins from the mitochondrion outer membrane. Also plays a critical role in regulating the surface expression of AMPA receptors (AMPAR), thereby regulating synaptic plasticity and learning and memory. The sequence is that of Outer mitochondrial transmembrane helix translocase from Danio rerio (Zebrafish).